Reading from the N-terminus, the 228-residue chain is Aspartate racemase (228 aa).

Residue 47–49 (DRT) coordinates substrate. Residue Cys-82 is the Proton donor/acceptor of the active site. Substrate contacts are provided by residues 83-85 (NTA) and Lys-164. The Proton donor/acceptor role is filled by Cys-194.

This sequence belongs to the aspartate/glutamate racemases family. In terms of assembly, homodimer. The existence of the interchain disulfide bond seen in the crystal structures is uncertain, but disulfide bonds have been reported for cytoplasmic proteins from thermophiles.

It catalyses the reaction L-aspartate = D-aspartate. With respect to regulation, weakly inhibited by citrate, but not by asparagine. The chain is Aspartate racemase from Pyrococcus horikoshii (strain ATCC 700860 / DSM 12428 / JCM 9974 / NBRC 100139 / OT-3).